Consider the following 397-residue polypeptide: Nicotinate phosphoribosyltransferase (397 aa).

The residue at position 221 (His-221) is a Phosphohistidine; by autocatalysis.

It belongs to the NAPRTase family. Post-translationally, transiently phosphorylated on a His residue during the reaction cycle. Phosphorylation strongly increases the affinity for substrates and increases the rate of nicotinate D-ribonucleotide production. Dephosphorylation regenerates the low-affinity form of the enzyme, leading to product release.

The enzyme catalyses nicotinate + 5-phospho-alpha-D-ribose 1-diphosphate + ATP + H2O = nicotinate beta-D-ribonucleotide + ADP + phosphate + diphosphate. The protein operates within cofactor biosynthesis; NAD(+) biosynthesis; nicotinate D-ribonucleotide from nicotinate: step 1/1. Its function is as follows. Catalyzes the synthesis of beta-nicotinate D-ribonucleotide from nicotinate and 5-phospho-D-ribose 1-phosphate at the expense of ATP. The protein is Nicotinate phosphoribosyltransferase of Herminiimonas arsenicoxydans.